The sequence spans 140 residues: Phosphopantetheine adenylyltransferase (140 aa).

Residue S9 participates in substrate binding. ATP contacts are provided by residues 9–10 (SF) and H17. Substrate-binding residues include K41, T74, and R88. ATP contacts are provided by residues 89 to 91 (GLR), E99, and 124 to 130 (KRSLSST).

This sequence belongs to the bacterial CoaD family. In terms of assembly, homohexamer. It depends on Mg(2+) as a cofactor.

The protein resides in the cytoplasm. The catalysed reaction is (R)-4'-phosphopantetheine + ATP + H(+) = 3'-dephospho-CoA + diphosphate. It functions in the pathway cofactor biosynthesis; coenzyme A biosynthesis; CoA from (R)-pantothenate: step 4/5. Functionally, reversibly transfers an adenylyl group from ATP to 4'-phosphopantetheine, yielding dephospho-CoA (dPCoA) and pyrophosphate. The polypeptide is Phosphopantetheine adenylyltransferase (Mycoplasma capricolum subsp. capricolum (strain California kid / ATCC 27343 / NCTC 10154)).